Here is a 91-residue protein sequence, read N- to C-terminus: DNA-directed RNA polymerase subunit omega (91 aa).

It belongs to the RNA polymerase subunit omega family. As to quaternary structure, the RNAP catalytic core consists of 2 alpha, 1 beta, 1 beta' and 1 omega subunit. When a sigma factor is associated with the core the holoenzyme is formed, which can initiate transcription.

It catalyses the reaction RNA(n) + a ribonucleoside 5'-triphosphate = RNA(n+1) + diphosphate. Functionally, promotes RNA polymerase assembly. Latches the N- and C-terminal regions of the beta' subunit thereby facilitating its interaction with the beta and alpha subunits. The polypeptide is DNA-directed RNA polymerase subunit omega (Aeromonas hydrophila subsp. hydrophila (strain ATCC 7966 / DSM 30187 / BCRC 13018 / CCUG 14551 / JCM 1027 / KCTC 2358 / NCIMB 9240 / NCTC 8049)).